Consider the following 447-residue polypeptide: Phosphoglucosamine mutase (447 aa).

Catalysis depends on S100, which acts as the Phosphoserine intermediate. S100, D239, D241, and D243 together coordinate Mg(2+). S100 is modified (phosphoserine).

It belongs to the phosphohexose mutase family. Mg(2+) is required as a cofactor. Post-translationally, activated by phosphorylation.

It carries out the reaction alpha-D-glucosamine 1-phosphate = D-glucosamine 6-phosphate. In terms of biological role, catalyzes the conversion of glucosamine-6-phosphate to glucosamine-1-phosphate. The protein is Phosphoglucosamine mutase of Thermoanaerobacter pseudethanolicus (strain ATCC 33223 / 39E) (Clostridium thermohydrosulfuricum).